The following is a 258-amino-acid chain: Rho-related GTP-binding protein RhoU (258 aa).

The disordered stretch occupies residues 1–45 (MPPQQGDPAFPDRCEAPPVPPRRERGGRGGRGPGEPGGRGRAGGA). Residues 10-27 (FPDRCEAPPVPPRRERGG) are compositionally biased toward basic and acidic residues. Positions 29-45 (GGRGPGEPGGRGRAGGA) are enriched in gly residues. Residues 56-63 (GDGAVGKT), 103-107 (DTAGQ), and 161-164 (TQSD) each bind GTP. Residues Lys177 and Lys248 each participate in a glycyl lysine isopeptide (Lys-Gly) (interchain with G-Cter in ubiquitin) cross-link. Cys256 carries the S-palmitoyl cysteine lipid modification.

It belongs to the small GTPase superfamily. Rho family. As to quaternary structure, interacts with PAK1. Interacts with PAK3. Interacts with ARHGAP30 in a GTP-independent manner. In its GTP-loaded conformation, interacts with ARHGAP31. Interacts with PTK2B/PYK2. Interacts with PAK4; the interaction is PAK4 kinase activity-independent and protects RHOU from ubiquitination. The cofactor is Mg(2+). In terms of processing, ubiquitinated. 'Lys-48'-linked ubiquitination at Lys-177 and Lys-248 by the ECS(RAB40A) complex leading to its degradation. Post-translationally, tyrosine phosphorylated by SRC in response to PTK2B/PYK2 activation. As to expression, ubiquitously expressed in all tissues examined. Expressed at high levels in the stomach, small intestine, brain, skeletal muscle and placenta.

It localises to the cell membrane. The protein localises to the golgi apparatus membrane. The protein resides in the cell junction. Its subcellular location is the focal adhesion. It is found in the cell projection. It localises to the podosome. Binds to and activates protein kinase PAK1. Plays a role in the regulation of cell morphology, cytoskeletal organization and focal adhesion assembly during cell migration. Also stimulates quiescent cells to reenter the cell cycle. Has no detectable GTPase activity but its high intrinsic guanine nucleotide exchange activity suggests it is constitutively GTP-bound. The polypeptide is Rho-related GTP-binding protein RhoU (Homo sapiens (Human)).